Here is a 207-residue protein sequence, read N- to C-terminus: Holliday junction branch migration complex subunit RuvA (207 aa).

A domain I region spans residues 1–64; sequence MISYIKGELA…EDECSLFGFL (64 aa). The domain II stretch occupies residues 65 to 143; the sequence is TRDDLSMFKM…LDEVFESALS (79 aa). A flexible linker region spans residues 144–155; sequence KNKKADNNSNVS. A domain III region spans residues 156–207; the sequence is NVMMIRNDAVEALVSLGYSSKDALVAVKEVEDIENKDSETVLKEALKKLVKF.

Belongs to the RuvA family. Homotetramer. Forms an RuvA(8)-RuvB(12)-Holliday junction (HJ) complex. HJ DNA is sandwiched between 2 RuvA tetramers; dsDNA enters through RuvA and exits via RuvB. An RuvB hexamer assembles on each DNA strand where it exits the tetramer. Each RuvB hexamer is contacted by two RuvA subunits (via domain III) on 2 adjacent RuvB subunits; this complex drives branch migration. In the full resolvosome a probable DNA-RuvA(4)-RuvB(12)-RuvC(2) complex forms which resolves the HJ.

It localises to the cytoplasm. In terms of biological role, the RuvA-RuvB-RuvC complex processes Holliday junction (HJ) DNA during genetic recombination and DNA repair, while the RuvA-RuvB complex plays an important role in the rescue of blocked DNA replication forks via replication fork reversal (RFR). RuvA specifically binds to HJ cruciform DNA, conferring on it an open structure. The RuvB hexamer acts as an ATP-dependent pump, pulling dsDNA into and through the RuvAB complex. HJ branch migration allows RuvC to scan DNA until it finds its consensus sequence, where it cleaves and resolves the cruciform DNA. The sequence is that of Holliday junction branch migration complex subunit RuvA from Lachnospira eligens (strain ATCC 27750 / DSM 3376 / VPI C15-48 / C15-B4) (Eubacterium eligens).